The sequence spans 423 residues: Ankyrin repeat and SAM domain-containing protein 4B (423 aa).

Residues 1-251 (MSTRYHQAAS…PKDFKEKLHF (251 aa)) are mediates localization to microvilli. 3 ANK repeats span residues 31-60 (DGMTPTLLAAYHGNLEALEIICSRGGDPDK), 64-93 (WGNTPLHYAASNGHTHCISFLVNFGANIFA), and 97-126 (DLKSPLDAAASREQKECVALLDKAATVQNT). Residues 130 to 169 (KRVTRLKEQALKNARKQMKECERLQERHQNKMARTYSKED) are a coiled coil. 3 disordered regions span residues 158–181 (QNKMARTYSKEDSGTISSSHSTLS), 207–227 (KSKKNKDTTEQLEKDGRSGQR), and 303–335 (QRQGAAGTVEEEEEEEEEEEEEKREANGTAGDL). Over residues 171-181 (GTISSSHSTLS) the composition is skewed to low complexity. The segment covering 207–224 (KSKKNKDTTEQLEKDGRS) has biased composition (basic and acidic residues). The segment at 253–352 (VEEDDDVQHE…EWEEDAVDAT (100 aa)) is mediates interaction with MYO7B. Residues 301–335 (LFQRQGAAGTVEEEEEEEEEEEEEKREANGTAGDL) adopt a coiled-coil conformation. Over residues 311–324 (VEEEEEEEEEEEEE) the composition is skewed to acidic residues. Residues 357-409 (FLQSQHLEEFLPIFMREQIDLEALLLCSDEDLQNIHMQLGPRKKVLSAIDKRK) form the SAM domain. Positions 421-423 (TSL) match the PDZ-binding; mediates interaction with USH1C motif.

In terms of assembly, part of the IMAC/intermicrovillar adhesion complex/intermicrovillar tip-link complex composed of ANKS4B, MYO7B, USH1C, CDHR2 and CDHR5. Interacts with USH1C; the interaction is direct and is required for ANKS4B localization to the tip of microvilli. Interacts with MYO7B; the interaction is direct. May interact with HSPA5. In terms of tissue distribution, cochlea, kidney, lung, liver, pancreas, salivary gland and small intestine (at protein level). Expressed in kidney, small intestine, pancreas, liver and colon. Not detected in heart, spleen and brain.

It is found in the cell projection. It localises to the microvillus. In terms of biological role, as part of the intermicrovillar adhesion complex/IMAC plays a role in epithelial brush border differentiation, controlling microvilli organization and length. Plays a role in assembly of the complex. May play a role in cellular response to endoplasmic reticulum stress. This Mus musculus (Mouse) protein is Ankyrin repeat and SAM domain-containing protein 4B.